Reading from the N-terminus, the 442-residue chain is Proline--tRNA ligase (442 aa).

Belongs to the class-II aminoacyl-tRNA synthetase family. ProS type 2 subfamily. As to quaternary structure, homodimer.

The protein localises to the cytoplasm. The catalysed reaction is tRNA(Pro) + L-proline + ATP = L-prolyl-tRNA(Pro) + AMP + diphosphate. In terms of biological role, catalyzes the attachment of proline to tRNA(Pro) in a two-step reaction: proline is first activated by ATP to form Pro-AMP and then transferred to the acceptor end of tRNA(Pro). The chain is Proline--tRNA ligase from Brucella ovis (strain ATCC 25840 / 63/290 / NCTC 10512).